A 646-amino-acid chain; its full sequence is Peptidylprolyl isomerase domain and WD repeat-containing protein 1 (646 aa).

The segment at 1–50 (MATESGSDSQLRRRRRRDPEGSEKTELSEREPALAVAGSEENDDENEERW) is disordered. A2 is modified (N-acetylalanine). Over residues 17 to 32 (RDPEGSEKTELSEREP) the composition is skewed to basic and acidic residues. WD repeat units follow at residues 88–126 (MHRD…IEFV), 131–170 (SHLG…MINM), 221–260 (LHVS…YKFP), and 278–319 (KCKA…RVFD). Residues 490 to 645 (VSDSAIVHTS…EDVSIINITV (156 aa)) form the PPIase cyclophilin-type domain.

The protein belongs to the cyclophilin-type PPIase family. PPIL1 subfamily. As to quaternary structure, identified in the spliceosome C complex.

The protein localises to the nucleus. The catalysed reaction is [protein]-peptidylproline (omega=180) = [protein]-peptidylproline (omega=0). With respect to regulation, inhibited by cyclosporin A (CsA). PPIase that catalyzes the cis-trans isomerization of proline imidic peptide bonds in oligopeptides and may therefore assist protein folding. May be involved in pre-mRNA splicing. The sequence is that of Peptidylprolyl isomerase domain and WD repeat-containing protein 1 from Mus musculus (Mouse).